The primary structure comprises 246 residues: CD99 antigen-like protein 2 (246 aa).

Residues 1 to 25 (MVARLTTLLVCLVFSLATLVQRGYG) form the signal peptide. Over 26–160 (DFDDFNLEDA…PGSGAVTDPG (135 aa)) the chain is Extracellular. Residues 43-156 (KQSHFSTTTR…SQDDPGSGAV (114 aa)) are disordered. Low complexity-rich tracts occupy residues 49–58 (TTTRRTGTTR) and 71–81 (TTTTTKRPGTT). The segment covering 100–109 (DDRNDLDGPK) has biased composition (basic and acidic residues). A glycan (O-linked (Xyl...) (chondroitin sulfate) serine) is linked at Ser153. Residues 161-181 (TIAGLVSALAAALLGAVSGYL) form a helical membrane-spanning segment. Topologically, residues 182 to 246 (SYQHRKFCFS…EPLAPERPRI (65 aa)) are cytoplasmic. The interval 223–246 (APPVTDSTQHSQPTEPLAPERPRI) is disordered. Positions 227–236 (TDSTQHSQPT) are enriched in polar residues.

Belongs to the CD99 family. O-glycosylated. As to expression, expressed predominantly in the ventral medullary surface of the brain, moderate expression in the cerebral cortex and cerebellum. Low expression in lung and kidney. No expression in heart, stomach, intestine and skeletal muscle.

The protein localises to the cell membrane. It is found in the cell junction. It localises to the secreted. Functionally, plays a role in a late step of leukocyte extravasation helping cells to overcome the endothelial basement membrane. Acts at the same site as, but independently of, PECAM1. Homophilic adhesion molecule, but these interactions may not be required for cell aggregation. The sequence is that of CD99 antigen-like protein 2 (Cd99l2) from Rattus norvegicus (Rat).